The primary structure comprises 217 residues: Aminopyrimidine aminohydrolase (217 aa).

Residue Asp44 coordinates substrate. Residue Cys135 is the Nucleophile of the active site. Positions 139 and 165 each coordinate substrate. Residue Glu207 is the Proton donor of the active site.

This sequence belongs to the TenA family. In terms of assembly, homotetramer.

The catalysed reaction is 4-amino-5-aminomethyl-2-methylpyrimidine + H2O = 4-amino-5-hydroxymethyl-2-methylpyrimidine + NH4(+). Its pathway is cofactor biosynthesis; thiamine diphosphate biosynthesis. In terms of biological role, catalyzes an amino-pyrimidine hydrolysis reaction at the C5' of the pyrimidine moiety of thiamine compounds to give a hydroxymethylpyrimidine (HMP). Displays low activity on 4-amino-5-aminomethyl-2-methylpyrimidine as substrate, indicating that the enzyme may act on a different HMP precursor that may derive from the human stomach food assumption or processing. Is probably involved in thiamine biosynthesis. Does not display thiaminase II activity, as it is unable to hydrolyze thiamine. The chain is Aminopyrimidine aminohydrolase from Helicobacter pylori (Campylobacter pylori).